We begin with the raw amino-acid sequence, 383 residues long: Interleukin-13 receptor subunit alpha-2 (383 aa).

The signal sequence occupies residues 1-21 (MAFVHIRCLCFILLCTITGYS). The Extracellular portion of the chain corresponds to 22 to 334 (LEIKVNPPQD…WEGYTGPDSK (313 aa)). 3 Fibronectin type-III domains span residues 28–128 (PPQD…SDEG), 131–219 (ETKI…PIRS), and 234–332 (PPEF…TGPD). Cysteines 59 and 107 form a disulfide. N-linked (GlcNAc...) asparagine glycosylation occurs at N109. The cysteines at positions 139 and 149 are disulfide-linked. Residue N162 is glycosylated (N-linked (GlcNAc...) asparagine). C178 and C191 are oxidised to a cystine. Residues N209 and N293 are each glycosylated (N-linked (GlcNAc...) asparagine). C263 and C310 form a disulfide bridge. The WSXWS motif motif lies at 316 to 320 (WSEWS). The helical transmembrane segment at 335-355 (IIFIVPVCLFFIFLLLLLCLI) threads the bilayer. At 356–383 (VEKEEPEPTLSLHVDLNKEVCAYEDTLC) the chain is on the cytoplasmic side.

It belongs to the type I cytokine receptor family. Type 5 subfamily. As to quaternary structure, interacts with IL4RA. Interacts with high affinity to interleukin-13 (IL13), but not to interleukin-4 (IL4). In terms of processing, cleaved by MMP8 leading to a soluble form that is also able to interact with IL13.

The protein localises to the cell membrane. The protein resides in the secreted. Cell surface receptor that plays a role in the regulation of IL-13-mediated responses. Functions as a decoy receptor that inhibits IL-13- and IL-4-mediated signal transduction via the JAK-STAT pathway and thereby modulates immune responses and inflammation. Serves as a functional signaling receptor for IL-13 in an alternative pathway involving AP-1 ultimately leading to the production of TGFB1. In Mus musculus (Mouse), this protein is Interleukin-13 receptor subunit alpha-2 (Il13ra2).